Reading from the N-terminus, the 1335-residue chain is Bifunctional autolysin (1335 aa).

Positions 1-29 (MAKKFNYKLPSMVALTLFGTAFTAHQANA) are cleaved as a signal peptide. Disordered regions lie at residues 51-88 (QAEK…QSTT), 100-262 (NEIS…KYKE), and 514-535 (WGTT…NNKL). Composition is skewed to polar residues over residues 58–88 (EVTQ…QSTT), 100–127 (NEIS…VTKN), 143–155 (TDTN…QSVA), 176–223 (TASQ…NASG), and 244–258 (SLNN…TTSY). The N-acetylmuramoyl-L-alanine amidase stretch occupies residues 303–863 (VSSQKTSSLP…LSTQSTPAPK (561 aa)). The span at 515–531 (GTTSTKPSQPSKPSGGT) shows a compositional bias: low complexity. GW domains follow at residues 533–610 (NKLT…YNTA), 612–686 (APVK…TASK), 700–774 (TVTN…YNTA), 776–850 (SPVK…APSK), 868–943 (STQT…TQNI), 945–1020 (KQTQ…QNST), and 1023–1096 (QSTP…KEKI). Residues 864-1335 (QVKPSTQTVN…GKYFEIPTYK (472 aa)) are endo-beta-N-acetylglucosaminidase.

The protein in the N-terminal section; belongs to the N-acetylmuramoyl-L-alanine amidase 2 family. This sequence in the C-terminal section; belongs to the glycosyl hydrolase 73 family. In terms of assembly, oligomer; forms a ring structure at the cell surface which is important for efficient partitioning of daughter cells after cell division. Post-translationally, undergoes proteolytic processing to generate the two extracellular lytic enzymes, probably at the septal region on the cell surface.

It localises to the secreted. The enzyme catalyses Hydrolyzes the link between N-acetylmuramoyl residues and L-amino acid residues in certain cell-wall glycopeptides.. The catalysed reaction is an N(4)-(oligosaccharide-(1-&gt;3)-[oligosaccharide-(1-&gt;6)]-beta-D-Man-(1-&gt;4)-beta-D-GlcNAc-(1-&gt;4)-alpha-D-GlcNAc)-L-asparaginyl-[protein] + H2O = an oligosaccharide-(1-&gt;3)-[oligosaccharide-(1-&gt;6)]-beta-D-Man-(1-&gt;4)-D-GlcNAc + N(4)-(N-acetyl-beta-D-glucosaminyl)-L-asparaginyl-[protein]. Functionally, endohydrolysis of the di-N-acetylchitobiosyl unit in high-mannose glycopeptides and glycoproteins containing the -[(Man)5(GlcNAc)2]-Asn structure. One N-acetyl-D-glucosamine residue remains attached to the protein; the rest of the oligosaccharide is released intact. Cleaves the peptidoglycan connecting the daughter cells at the end of the cell division cycle, resulting in the separation of the two newly divided cells. Acts as an autolysin in penicillin-induced lysis. As a bacterial surface-associated protein, mediates attachment to polystyrene surfaces, contributing to biofilm formation. Also has vitronectin-binding activity. This Staphylococcus epidermidis protein is Bifunctional autolysin (atl).